The primary structure comprises 468 residues: Probable ubiquitin carboxyl-terminal hydrolase R319 (468 aa).

One can recognise a USP domain in the interval 42 to 462; the sequence is TGIMNLGNTC…NAYILFYIRS (421 aa). Residue cysteine 51 is the Nucleophile of the active site. Catalysis depends on histidine 420, which acts as the Proton acceptor.

The protein belongs to the peptidase C19 family.

The enzyme catalyses Thiol-dependent hydrolysis of ester, thioester, amide, peptide and isopeptide bonds formed by the C-terminal Gly of ubiquitin (a 76-residue protein attached to proteins as an intracellular targeting signal).. The polypeptide is Probable ubiquitin carboxyl-terminal hydrolase R319 (Acanthamoeba polyphaga (Amoeba)).